The following is a 25-amino-acid chain: Insulin mimetic protein (25 aa).

Residues 1–25 (TKDPELKQCKKQQKKQQQYDDDDKK) form a disordered region.

In terms of processing, glycosylated. In terms of tissue distribution, expressed in seed.

The sequence is that of Insulin mimetic protein from Cnidoscolus quercifolius.